A 344-amino-acid chain; its full sequence is L-rhamnose-proton symporter (344 aa).

The next 10 helical transmembrane spans lie at 4-24 (AITM…CFYA), 38-58 (WSVG…ALLL), 68-88 (FSLS…IGNI), 101-121 (MGIG…TPII), 137-157 (TLLG…AGQL), 175-195 (LVLA…MNAA), 214-234 (LPSY…FCFI), 259-279 (VLLS…YAWG), 290-310 (ISWM…GLVL), and 323-343 (VLSL…MGMA).

The protein belongs to the L-rhamnose transporter (TC 2.A.7.6) family.

It is found in the cell inner membrane. It catalyses the reaction L-rhamnopyranose(in) + H(+)(in) = L-rhamnopyranose(out) + H(+)(out). Functionally, uptake of L-rhamnose across the cytoplasmic membrane with the concomitant transport of protons into the cell (symport system). This is L-rhamnose-proton symporter from Escherichia coli O17:K52:H18 (strain UMN026 / ExPEC).